The following is a 448-amino-acid chain: Glutamyl-tRNA reductase (448 aa).

Substrate contacts are provided by residues T49 to R52, S109, E114 to Q116, and Q120. C50 functions as the Nucleophile in the catalytic mechanism. Residue G189–S194 participates in NADP(+) binding.

This sequence belongs to the glutamyl-tRNA reductase family. As to quaternary structure, homodimer.

The enzyme catalyses (S)-4-amino-5-oxopentanoate + tRNA(Glu) + NADP(+) = L-glutamyl-tRNA(Glu) + NADPH + H(+). Its pathway is porphyrin-containing compound metabolism; protoporphyrin-IX biosynthesis; 5-aminolevulinate from L-glutamyl-tRNA(Glu): step 1/2. Functionally, catalyzes the NADPH-dependent reduction of glutamyl-tRNA(Glu) to glutamate 1-semialdehyde (GSA). This chain is Glutamyl-tRNA reductase, found in Staphylococcus aureus (strain Mu3 / ATCC 700698).